We begin with the raw amino-acid sequence, 299 residues long: B3 domain-containing transcription factor NGA2 (299 aa).

A disordered region spans residues methionine 1–histidine 21. Positions phenylalanine 23 to proline 129 form a DNA-binding region, TF-B3. The segment at glycine 226–arginine 249 is disordered.

It is found in the nucleus. Regulates lateral organ growth. Functionally redundant with NGA1, NGA3 and NGA4. The polypeptide is B3 domain-containing transcription factor NGA2 (NGA2) (Arabidopsis thaliana (Mouse-ear cress)).